The chain runs to 565 residues: NAD-dependent malic enzyme (565 aa).

Catalysis depends on tyrosine 104, which acts as the Proton donor. Arginine 157 lines the NAD(+) pocket. The active-site Proton acceptor is the lysine 175. A divalent metal cation is bound by residues glutamate 246, aspartate 247, and aspartate 270. Positions 270 and 418 each coordinate NAD(+).

The protein belongs to the malic enzymes family. Homotetramer. Mg(2+) is required as a cofactor. It depends on Mn(2+) as a cofactor.

The enzyme catalyses (S)-malate + NAD(+) = pyruvate + CO2 + NADH. It catalyses the reaction oxaloacetate + H(+) = pyruvate + CO2. This Yersinia enterocolitica serotype O:8 / biotype 1B (strain NCTC 13174 / 8081) protein is NAD-dependent malic enzyme.